The following is a 232-amino-acid chain: Small ribosomal subunit protein uS2 (232 aa).

The protein belongs to the universal ribosomal protein uS2 family.

The sequence is that of Small ribosomal subunit protein uS2 from Baumannia cicadellinicola subsp. Homalodisca coagulata.